A 415-amino-acid polypeptide reads, in one-letter code: Small ribosomal subunit protein uS5m (415 aa).

Residues 1-31 (MRRSGPELWKTLTSVSKSGQKKGRRNTRQPV) are disordered. An S5 DRBM domain is found at 131–197 (FETYCLEVKR…GMASRKIFHV (67 aa)). Residues 396-415 (GVEPMPLGIGLSHVVPKKDD) form a disordered region.

Belongs to the universal ribosomal protein uS5 family. As to quaternary structure, component of the mitochondrial ribosome small subunit (28S) which comprises a 12S rRNA and about 30 distinct proteins.

It localises to the mitochondrion. The protein is Small ribosomal subunit protein uS5m (mrps-5) of Caenorhabditis briggsae.